The sequence spans 148 residues: Glycine cleavage system H protein 5 (148 aa).

In terms of domain architecture, Lipoyl-binding spans 33–115 (VFTIGLTSVA…YGQGWIAKVK (83 aa)). K74 carries the post-translational modification N6-lipoyllysine.

The protein belongs to the GcvH family. As to quaternary structure, the glycine cleavage system is composed of four proteins: P, T, L and H. (R)-lipoate is required as a cofactor.

Its function is as follows. The glycine cleavage system catalyzes the degradation of glycine. The H protein shuttles the methylamine group of glycine from the P protein to the T protein. The sequence is that of Glycine cleavage system H protein 5 from Aquifex aeolicus (strain VF5).